The following is a 314-amino-acid chain: uncharacterized protein (314 aa).

The region spanning 192-289 is the HTH araC/xylS-type domain; that stretch reads TEVKLHIKDN…GSSPGLFRSL (98 aa). 2 consecutive DNA-binding regions (H-T-H motif) follow at residues 209–230 and 257–279; these read TDVA…AAEL and IKEI…SAKI.

This is an uncharacterized protein from Bacillus subtilis (strain 168).